The sequence spans 130 residues: Large ribosomal subunit protein bL20c (130 aa).

It belongs to the bacterial ribosomal protein bL20 family.

Its subcellular location is the plastid. It is found in the chloroplast. Its function is as follows. Binds directly to 23S ribosomal RNA and is necessary for the in vitro assembly process of the 50S ribosomal subunit. It is not involved in the protein synthesizing functions of that subunit. The chain is Large ribosomal subunit protein bL20c from Oenothera argillicola (Appalachian evening primrose).